The chain runs to 282 residues: Kallikrein-11 (282 aa).

An N-terminal signal peptide occupies residues 1-50 (MQRLRWLRDWKSSGRGLTAAKEPGARSSPLQAMRILQLILLALATGLVGG). Positions 51–53 (ETR) are cleaved as a propeptide — activation peptide. Residues 53–280 (RIIKGFECKP…YVDWIQETMK (228 aa)) form the Peptidase S1 domain. 6 disulfides stabilise this stretch: cysteine 60/cysteine 195, cysteine 79/cysteine 95, cysteine 167/cysteine 269, cysteine 174/cysteine 241, cysteine 206/cysteine 220, and cysteine 231/cysteine 256. Histidine 94 serves as the catalytic Charge relay system. The N-linked (GlcNAc...) asparagine glycan is linked to asparagine 131. Catalysis depends on aspartate 142, which acts as the Charge relay system. 2 N-linked (GlcNAc...) asparagine glycosylation sites follow: asparagine 197 and asparagine 213. Serine 235 acts as the Charge relay system in catalysis. Residue asparagine 242 is glycosylated (N-linked (GlcNAc...) asparagine).

This sequence belongs to the peptidase S1 family. Kallikrein subfamily. About 40% of KLK11 is inactivated by internal cleavage after Arg-188. This proteolytic inactivation may be effected by plasminogen. In terms of tissue distribution, expressed in brain, skin and prostate. Isoform 1 is expressed preferentially in brain. Isoform 2 is expressed in prostate. Present in seminal plasma at concentrations ranging from 2 to 37 microg/mL (at protein level).

Its subcellular location is the secreted. It localises to the golgi apparatus. In terms of biological role, possible multifunctional protease. Efficiently cleaves 'bz-Phe-Arg-4-methylcoumaryl-7-amide', a kallikrein substrate, and weakly cleaves other substrates for kallikrein and trypsin. Cleaves synthetic peptides after arginine but not lysine residues. This chain is Kallikrein-11 (KLK11), found in Homo sapiens (Human).